The sequence spans 1709 residues: Acrosomal protein KIAA1210 (1709 aa).

8 disordered regions span residues Pro207–Ala226, Pro239–Pro275, Pro451–Thr663, Pro763–Glu973, Leu1211–Ala1382, Thr1408–His1516, Ala1539–Tyr1571, and Phe1589–Gly1653. Residues Pro257–Ser272 are compositionally biased toward basic residues. The segment covering Glu473–Gly490 has biased composition (basic and acidic residues). Composition is skewed to polar residues over residues Ala494 to Thr505 and Asp514 to Tyr527. Over residues Glu595–Gln608 the composition is skewed to low complexity. The span at Pro651–Thr663 shows a compositional bias: basic and acidic residues. Positions Glu777–Glu794 are enriched in acidic residues. 5 stretches are compositionally biased toward polar residues: residues Lys886–Ser941, Phe1288–Gln1299, His1332–Gly1350, Pro1366–His1376, and Asp1457–Gln1469. Residues Ser1502 to Gly1513 are compositionally biased toward low complexity. The segment covering Gln1542–Ala1552 has biased composition (basic and acidic residues).

In terms of assembly, interacts with TOP2B.

Its subcellular location is the cytoplasmic vesicle. The protein resides in the secretory vesicle. It localises to the acrosome. This chain is Acrosomal protein KIAA1210, found in Homo sapiens (Human).